The chain runs to 348 residues: Bifunctional dihydroflavonol 4-reductase/flavanone 4-reductase (348 aa).

Residues Lys44 and Tyr163 each coordinate NADP(+).

It belongs to the NAD(P)-dependent epimerase/dehydratase family. Dihydroflavonol-4-reductase subfamily.

It carries out the reaction a (2R,3S,4S)-leucoanthocyanidin + NADP(+) = a (2R,3R)-dihydroflavonol + NADPH + H(+). The enzyme catalyses (2S)-flavan-4-ol + NADP(+) = (2S)-flavanone + NADPH + H(+). Functionally, bifunctional enzyme involved in flavonoid metabolism. May use dihydroquercetin, dihydrokaempferol, eriodictyol, garbanzol (5-deoxydihydrokaempferol), dihydrofisetin (5-deoxydihydroquercetin), naringenin to a low extent (10%), but not 5-deoxynaringenin or butin (5-deoxyeriodictyol) as substrate. The polypeptide is Bifunctional dihydroflavonol 4-reductase/flavanone 4-reductase (DFR) (Malus domestica (Apple)).